The primary structure comprises 505 residues: Lysine--tRNA ligase (505 aa).

Residues Glu415 and Glu422 each coordinate Mg(2+).

It belongs to the class-II aminoacyl-tRNA synthetase family. Homodimer. Requires Mg(2+) as cofactor.

The protein localises to the cytoplasm. It carries out the reaction tRNA(Lys) + L-lysine + ATP = L-lysyl-tRNA(Lys) + AMP + diphosphate. The sequence is that of Lysine--tRNA ligase from Shigella dysenteriae serotype 1 (strain Sd197).